The following is a 556-amino-acid chain: Oxygen-dependent choline dehydrogenase (556 aa).

6-35 (DYIIIGAGSAGNVLAARLTEDPGVSVLLLE) lines the FAD pocket. H475 functions as the Proton acceptor in the catalytic mechanism.

It belongs to the GMC oxidoreductase family. FAD is required as a cofactor.

The enzyme catalyses choline + A = betaine aldehyde + AH2. It carries out the reaction betaine aldehyde + NAD(+) + H2O = glycine betaine + NADH + 2 H(+). It participates in amine and polyamine biosynthesis; betaine biosynthesis via choline pathway; betaine aldehyde from choline (cytochrome c reductase route): step 1/1. Functionally, involved in the biosynthesis of the osmoprotectant glycine betaine. Catalyzes the oxidation of choline to betaine aldehyde and betaine aldehyde to glycine betaine at the same rate. This Xanthomonas campestris pv. campestris (strain 8004) protein is Oxygen-dependent choline dehydrogenase.